Consider the following 133-residue polypeptide: uncharacterized protein (133 aa).

The tract at residues 44-79 (VENQLASSKTEEQTLKISKKSNLNPAQKSSTFGLEN) is disordered. Residues 63-79 (KSNLNPAQKSSTFGLEN) are compositionally biased toward polar residues.

The protein localises to the plastid. Its subcellular location is the chloroplast. This is an uncharacterized protein from Chlorella vulgaris (Green alga).